A 1147-amino-acid chain; its full sequence is Disease resistance protein RPP4 (1147 aa).

Residues 11 to 175 form the TIR domain; that stretch reads RRYDVFPSFS…KIANDVSNKL (165 aa). Residue Glu86 is part of the active site. The NB-ARC domain occupies 189-446; it reads EDHIKAIKSI…CFFNGFKVSN (258 aa). 18 LRR repeats span residues 548–573, 584–606, 608–629, 630–653, 655–676, 698–721, 722–743, 744–766, 767–790, 792–813, 814–836, 837–860, 926–950, 952–973, 974–996, 997–1017, 1018–1042, and 1044–1064; these read MRNL…LWSK, PLKL…TFKA, YLVN…TLPL, GSLK…SLAI, LEEL…IQNA, MCNL…IYLP, RKLK…NFKA, EYLV…TQPL, LERL…IQNA, TKLI…DLNL, ESLE…KMGC, LGSL…SKAT, LKRL…IGNL, HRLV…DVNL, SSLI…PLIS, TRIE…DLTR, and SVLL…IFRL.

In terms of assembly, interacts with RSH1.

The enzyme catalyses NAD(+) + H2O = ADP-D-ribose + nicotinamide + H(+). In terms of biological role, TIR-NB-LRR receptor-like protein that confers resistance to the pathogen Hyaloperonospora arabidopsis isolates Emoy2 and Emwa1 (downy mildew disease). Plays a role in the regulation of temperature response during plant growth and survival. The chain is Disease resistance protein RPP4 from Arabidopsis thaliana (Mouse-ear cress).